We begin with the raw amino-acid sequence, 316 residues long: Ribosomal RNA small subunit methyltransferase H (316 aa).

Residues 37-39, Asp56, Phe83, Asp106, and His113 contribute to the S-adenosyl-L-methionine site; that span reads GGH. The disordered stretch occupies residues 276 to 316; it reads PILPSEEETKENPASRSAKLRVLRKTKSADKKYKKENSKEE. The segment covering 302–316 has biased composition (basic and acidic residues); the sequence is KSADKKYKKENSKEE.

This sequence belongs to the methyltransferase superfamily. RsmH family.

Its subcellular location is the cytoplasm. The enzyme catalyses cytidine(1402) in 16S rRNA + S-adenosyl-L-methionine = N(4)-methylcytidine(1402) in 16S rRNA + S-adenosyl-L-homocysteine + H(+). Functionally, specifically methylates the N4 position of cytidine in position 1402 (C1402) of 16S rRNA. The sequence is that of Ribosomal RNA small subunit methyltransferase H from Leptospira borgpetersenii serovar Hardjo-bovis (strain JB197).